We begin with the raw amino-acid sequence, 145 residues long: D-aminoacyl-tRNA deacylase (145 aa).

The Gly-cisPro motif, important for rejection of L-amino acids motif lies at 137–138 (GP).

The protein belongs to the DTD family. In terms of assembly, homodimer.

It is found in the cytoplasm. The enzyme catalyses glycyl-tRNA(Ala) + H2O = tRNA(Ala) + glycine + H(+). It carries out the reaction a D-aminoacyl-tRNA + H2O = a tRNA + a D-alpha-amino acid + H(+). Functionally, an aminoacyl-tRNA editing enzyme that deacylates mischarged D-aminoacyl-tRNAs. Also deacylates mischarged glycyl-tRNA(Ala), protecting cells against glycine mischarging by AlaRS. Acts via tRNA-based rather than protein-based catalysis; rejects L-amino acids rather than detecting D-amino acids in the active site. By recycling D-aminoacyl-tRNA to D-amino acids and free tRNA molecules, this enzyme counteracts the toxicity associated with the formation of D-aminoacyl-tRNA entities in vivo and helps enforce protein L-homochirality. The chain is D-aminoacyl-tRNA deacylase from Methylacidiphilum infernorum (isolate V4) (Methylokorus infernorum (strain V4)).